The chain runs to 257 residues: UPF0246 protein Mmc1_3117 (257 aa).

This sequence belongs to the UPF0246 family.

This is UPF0246 protein Mmc1_3117 from Magnetococcus marinus (strain ATCC BAA-1437 / JCM 17883 / MC-1).